A 317-amino-acid chain; its full sequence is Biotin synthase (317 aa).

One can recognise a Radical SAM core domain in the interval Asn42–Lys260. Positions 57, 61, and 64 each coordinate [4Fe-4S] cluster. Cys101, Cys132, Cys192, and Arg264 together coordinate [2Fe-2S] cluster.

It belongs to the radical SAM superfamily. Biotin synthase family. In terms of assembly, homodimer. Requires [4Fe-4S] cluster as cofactor. [2Fe-2S] cluster is required as a cofactor.

It carries out the reaction (4R,5S)-dethiobiotin + (sulfur carrier)-SH + 2 reduced [2Fe-2S]-[ferredoxin] + 2 S-adenosyl-L-methionine = (sulfur carrier)-H + biotin + 2 5'-deoxyadenosine + 2 L-methionine + 2 oxidized [2Fe-2S]-[ferredoxin]. Its pathway is cofactor biosynthesis; biotin biosynthesis; biotin from 7,8-diaminononanoate: step 2/2. Its function is as follows. Catalyzes the conversion of dethiobiotin (DTB) to biotin by the insertion of a sulfur atom into dethiobiotin via a radical-based mechanism. This is Biotin synthase from Thiobacillus denitrificans (strain ATCC 25259 / T1).